A 175-amino-acid polypeptide reads, in one-letter code: Cytochrome c6, chloroplastic (175 aa).

Heme c contacts are provided by cysteine 86, cysteine 89, and histidine 90. Heme is bound at residue glutamine 98–threonine 102. Residue methionine 130 participates in heme c binding.

It belongs to the cytochrome c family. PetJ subfamily. As to quaternary structure, monomer. Interacts in vitro with LTO1. Post-translationally, binds 1 heme c group covalently per subunit.

The protein localises to the plastid. The protein resides in the chloroplast thylakoid lumen. Its function is as follows. Functions as an electron carrier between membrane-bound cytochrome b6-f and photosystem I in oxygenic photosynthesis. This is Cytochrome c6, chloroplastic (PETJ) from Arabidopsis thaliana (Mouse-ear cress).